A 62-amino-acid chain; its full sequence is uncharacterized protein (62 aa).

It is found in the plastid. Its subcellular location is the chloroplast. This is an uncharacterized protein from Guillardia theta (Cryptophyte).